Consider the following 198-residue polypeptide: Ribonuclease HII (198 aa).

In terms of domain architecture, RNase H type-2 spans 14 to 198 (GVIAGVDEVG…KNFAPISRAL (185 aa)). 3 residues coordinate a divalent metal cation: aspartate 20, glutamate 21, and aspartate 112.

It belongs to the RNase HII family. The cofactor is Mn(2+). Requires Mg(2+) as cofactor.

It is found in the cytoplasm. It carries out the reaction Endonucleolytic cleavage to 5'-phosphomonoester.. Functionally, endonuclease that specifically degrades the RNA of RNA-DNA hybrids. The chain is Ribonuclease HII from Wolbachia pipientis wMel.